Consider the following 354-residue polypeptide: Ion-translocating oxidoreductase complex subunit D (354 aa).

5 helical membrane-spanning segments follow: residues 19–39 (IMLW…YYFG), 40–60 (FGVL…EFLV), 70–89 (FYIS…VAIP), 94–116 (YWII…GGLG), and 123–143 (AMVG…TWLA). The residue at position 186 (Thr-186) is an FMN phosphoryl threonine. A run of 5 helical transmembrane segments spans residues 215–235 (LAGL…LFLV), 242–262 (WQIP…SWLF), 266–286 (MPSP…FFIA), 300–320 (LVFG…GGYP), and 321–341 (DGAA…DQYT).

Belongs to the NqrB/RnfD family. As to quaternary structure, the complex is composed of six subunits: RnfA, RnfB, RnfC, RnfD, RnfE and RnfG. The cofactor is FMN.

Its subcellular location is the cell inner membrane. Part of a membrane-bound complex that couples electron transfer with translocation of ions across the membrane. This is Ion-translocating oxidoreductase complex subunit D from Mannheimia succiniciproducens (strain KCTC 0769BP / MBEL55E).